Here is a 92-residue protein sequence, read N- to C-terminus: uncharacterized protein (92 aa).

An HTH cro/C1-type domain is found at 25–83 (LEEKLKQEKIDRKYLAQVTNIPYTTVSRIMRAEANREFNPEIDTILKIAKYFNCTMDEV). Residues 36–55 (RKYLAQVTNIPYTTVSRIMR) constitute a DNA-binding region (H-T-H motif).

This is an uncharacterized protein from Rickettsia prowazekii (strain Madrid E).